Here is a 305-residue protein sequence, read N- to C-terminus: Serine/threonine-protein phosphatase PP-X isozyme 1 (305 aa).

The Mn(2+) site is built by Asp-51, His-53, Asp-79, and Asn-111. His-112 (proton donor) is an active-site residue. The Mn(2+) site is built by His-161 and His-236.

The protein belongs to the PPP phosphatase family. PP-4 (PP-X) subfamily. In terms of assembly, interacts with TAP46. Mn(2+) serves as cofactor. In terms of tissue distribution, ubiquitous, mostly expressed in root mersitems, flowers, and vascular tissues.

It is found in the plastid stroma. It carries out the reaction O-phospho-L-seryl-[protein] + H2O = L-seryl-[protein] + phosphate. It catalyses the reaction O-phospho-L-threonyl-[protein] + H2O = L-threonyl-[protein] + phosphate. The polypeptide is Serine/threonine-protein phosphatase PP-X isozyme 1 (PPX1) (Arabidopsis thaliana (Mouse-ear cress)).